We begin with the raw amino-acid sequence, 1726 residues long: Probable serine/threonine-protein kinase roco4 (1726 aa).

4 LRR repeats span residues 256–277, 280–301, 303–324, and 326–347; these read KGKRLSLSRSNLSRFPMSITQM, HLVELDLSDNKITELPKDIQLL, SLRILILRGNLLEDIPLEICYL, and DLKILELQENPLNNFPLSVVQS. The Roc domain occupies 364-544; sequence KSETWNKVKL…KRLIHEAEKS (181 aa). GTP is bound by residues 377–384, 428–432, and 487–490; these read GQEGVGKT, DFGGQ, and THSD. Residues 591 to 787 form the COR domain; sequence AINSQKERYI…RTYWRNGVLL (197 aa). Positions 800 to 881 are enriched in low complexity; the sequence is SKQQQLQQQQ…STLNSQQLIN (82 aa). The disordered stretch occupies residues 800-890; it reads SKQQQLQQQQ…NPSVSPLSST (91 aa). Residues 1026–1292 form the Protein kinase domain; sequence IEYEKQIGKG…SYIVKELSEL (267 aa). Residues 1032 to 1040 and Lys-1055 contribute to the ATP site; that span reads IGKGGFGLV. Asp-1154 acts as the Proton acceptor in catalysis. A compositionally biased stretch (polar residues) spans 1319–1331; the sequence is ASTSSNADDGSQT. The segment at 1319–1385 is disordered; sequence ASTSSNADDG…SSPSTSFINS (67 aa). The span at 1332–1348 shows a compositional bias: low complexity; the sequence is NNNNNNNNNNNNNNNNN. Residues 1349–1364 are compositionally biased toward polar residues; that stretch reads SGSSIALSPSRSFEQQ. Over residues 1365–1381 the composition is skewed to low complexity; that stretch reads TTTTTTTTTSPSSPSTS. 6 WD repeats span residues 1422–1461, 1463–1502, 1506–1546, 1589–1627, 1633–1670, and 1674–1714; these read SVHKKMEVLAGVEAGETVWTKSADSSLCFWSTKKGHLINE, KCPHTVATTMMIKVGKYIWEATNSNGIYIWDMGTMTIVQQ, PHKG…KKHS, KHSTGSITSILAMKDEVWSGGSDGRIYIWKVKNEFELQK, AHHEKITSLIHLEDNVLSGSTDKCISLFKISDPKKPFT, and HHKQ…EKKT.

It belongs to the protein kinase superfamily. TKL Ser/Thr protein kinase family. ROCO subfamily.

It carries out the reaction L-seryl-[protein] + ATP = O-phospho-L-seryl-[protein] + ADP + H(+). The catalysed reaction is L-threonyl-[protein] + ATP = O-phospho-L-threonyl-[protein] + ADP + H(+). This Dictyostelium discoideum (Social amoeba) protein is Probable serine/threonine-protein kinase roco4 (roco4).